Here is a 37-residue protein sequence, read N- to C-terminus: Large ribosomal subunit protein bL36c (37 aa).

The protein belongs to the bacterial ribosomal protein bL36 family.

The protein resides in the plastid. The sequence is that of Large ribosomal subunit protein bL36c from Cuscuta gronovii (Common dodder).